The following is a 255-amino-acid chain: Hemin import ATP-binding protein HmuV (255 aa).

One can recognise an ABC transporter domain in the interval 2–238 (LRAHNLHIRR…ESLKAVFGLE (237 aa)). Residue 34-41 (GPNGAGKS) coordinates ATP.

Belongs to the ABC transporter superfamily. Heme (hemin) importer (TC 3.A.1.14.5) family. As to quaternary structure, the complex is composed of two ATP-binding proteins (HmuV), two transmembrane proteins (HmuU) and a solute-binding protein (HmuT).

It is found in the cell inner membrane. Part of the ABC transporter complex HmuTUV involved in hemin import. Responsible for energy coupling to the transport system. The chain is Hemin import ATP-binding protein HmuV from Pseudomonas fluorescens (strain Pf0-1).